The sequence spans 156 residues: 2-C-methyl-D-erythritol 2,4-cyclodiphosphate synthase (156 aa).

2 residues coordinate a divalent metal cation: aspartate 9 and histidine 11. Residues 9-11 and 35-36 contribute to the 4-CDP-2-C-methyl-D-erythritol 2-phosphate site; these read DAH and HS. An a divalent metal cation-binding site is contributed by histidine 43. A 4-CDP-2-C-methyl-D-erythritol 2-phosphate-binding site is contributed by 57–59; that stretch reads DIG.

This sequence belongs to the IspF family. As to quaternary structure, homotrimer. It depends on a divalent metal cation as a cofactor.

It carries out the reaction 4-CDP-2-C-methyl-D-erythritol 2-phosphate = 2-C-methyl-D-erythritol 2,4-cyclic diphosphate + CMP. It participates in isoprenoid biosynthesis; isopentenyl diphosphate biosynthesis via DXP pathway; isopentenyl diphosphate from 1-deoxy-D-xylulose 5-phosphate: step 4/6. Functionally, involved in the biosynthesis of isopentenyl diphosphate (IPP) and dimethylallyl diphosphate (DMAPP), two major building blocks of isoprenoid compounds. Catalyzes the conversion of 4-diphosphocytidyl-2-C-methyl-D-erythritol 2-phosphate (CDP-ME2P) to 2-C-methyl-D-erythritol 2,4-cyclodiphosphate (ME-CPP) with a corresponding release of cytidine 5-monophosphate (CMP). The sequence is that of 2-C-methyl-D-erythritol 2,4-cyclodiphosphate synthase from Hydrogenobaculum sp. (strain Y04AAS1).